Here is a 615-residue protein sequence, read N- to C-terminus: UvrABC system protein C (615 aa).

In terms of domain architecture, GIY-YIG spans 14–91; sequence TSPGCYIHKD…IKENKPKYNI (78 aa). Residues 196–231 form the UVR domain; the sequence is NKIIDELKGKMAAAAQTMEFERAAEYRDLIQAIGTL.

The protein belongs to the UvrC family. As to quaternary structure, interacts with UvrB in an incision complex.

It is found in the cytoplasm. The UvrABC repair system catalyzes the recognition and processing of DNA lesions. UvrC both incises the 5' and 3' sides of the lesion. The N-terminal half is responsible for the 3' incision and the C-terminal half is responsible for the 5' incision. The chain is UvrABC system protein C from Streptococcus pneumoniae serotype 19F (strain G54).